A 170-amino-acid polypeptide reads, in one-letter code: Adenine phosphoribosyltransferase (170 aa).

Belongs to the purine/pyrimidine phosphoribosyltransferase family. In terms of assembly, homodimer.

The protein localises to the cytoplasm. The enzyme catalyses AMP + diphosphate = 5-phospho-alpha-D-ribose 1-diphosphate + adenine. Its pathway is purine metabolism; AMP biosynthesis via salvage pathway; AMP from adenine: step 1/1. Its function is as follows. Catalyzes a salvage reaction resulting in the formation of AMP, that is energically less costly than de novo synthesis. In Enterococcus faecalis (strain ATCC 700802 / V583), this protein is Adenine phosphoribosyltransferase.